The chain runs to 151 residues: FUN14 domain-containing protein 2 (151 aa).

The Cytoplasmic portion of the chain corresponds to 1-42 (MAANSQGNFDGKFEALDLAELTKKQPWWRKLFGQESGPSAEK). Residues 43–63 (YSVATQLVIGGVTGWCTGFVF) traverse the membrane as a helical segment. The Mitochondrial intermembrane segment spans residues 64–69 (QKVGKL). The helical transmembrane segment at 70 to 90 (AATAVGGGFFLLQLANHTGYI) threads the bilayer. Over 91-126 (KVDWQRVEKDMKKAKEQLKIRKNKQIPTEVKSKAEE) the chain is Cytoplasmic. The chain crosses the membrane as a helical span at residues 127 to 147 (VVSFVKKNVLVTGGFFGGFLL). Residues 148–151 (GMAS) are Mitochondrial intermembrane-facing.

It belongs to the FUN14 family. Highly expressed in platelet (at protein level). Expressed in liver, brain, heart and muscle.

The protein localises to the mitochondrion outer membrane. Its subcellular location is the nucleus. Its function is as follows. Binds directly and specifically 1,2-Diacyl-sn-glycero-3-phospho-(1'-myo-inositol-3',4',5'-bisphosphate) (PIP3) leading to the recruitment of PIP3 to mitochondria and may play a role in the regulation of the platelet activation via AKT/GSK3B/cGMP signaling pathways. May act as transcription factor that regulates SREBP1 (isoform SREBP-1C) expression in order to modulate triglyceride (TG) homeostasis in hepatocytes. The sequence is that of FUN14 domain-containing protein 2 from Mus musculus (Mouse).